The primary structure comprises 187 residues: UPF0167 protein MT2352 (187 aa).

It belongs to the UPF0167 family.

This Mycobacterium tuberculosis (strain CDC 1551 / Oshkosh) protein is UPF0167 protein MT2352.